A 428-amino-acid chain; its full sequence is Enolase (428 aa).

Gln-163 is a (2R)-2-phosphoglycerate binding site. Glu-205 acts as the Proton donor in catalysis. Positions 242, 285, and 312 each coordinate Mg(2+). 4 residues coordinate (2R)-2-phosphoglycerate: Lys-337, Arg-366, Ser-367, and Lys-388. The active-site Proton acceptor is Lys-337.

The protein belongs to the enolase family. Mg(2+) serves as cofactor.

It is found in the cytoplasm. Its subcellular location is the secreted. The protein resides in the cell surface. The enzyme catalyses (2R)-2-phosphoglycerate = phosphoenolpyruvate + H2O. Its pathway is carbohydrate degradation; glycolysis; pyruvate from D-glyceraldehyde 3-phosphate: step 4/5. Its function is as follows. Catalyzes the reversible conversion of 2-phosphoglycerate (2-PG) into phosphoenolpyruvate (PEP). It is essential for the degradation of carbohydrates via glycolysis. In Polynucleobacter asymbioticus (strain DSM 18221 / CIP 109841 / QLW-P1DMWA-1) (Polynucleobacter necessarius subsp. asymbioticus), this protein is Enolase.